The primary structure comprises 442 residues: GTPase Der (442 aa).

2 consecutive EngA-type G domains span residues 2 to 168 (ATVL…EEAG) and 182 to 356 (LKVA…EKID). Residues 8–15 (GRPNVGKS), 55–59 (DTCGL), 118–121 (NKVE), 188–195 (GKPNAGKS), 235–239 (DTAGM), and 301–304 (NKSD) contribute to the GTP site. Residues 357–442 (LRIPTGLLNN…PIFIKLRRKK (86 aa)) form the KH-like domain.

The protein belongs to the TRAFAC class TrmE-Era-EngA-EngB-Septin-like GTPase superfamily. EngA (Der) GTPase family. As to quaternary structure, associates with the 50S ribosomal subunit.

GTPase that plays an essential role in the late steps of ribosome biogenesis. The protein is GTPase Der of Kosmotoga olearia (strain ATCC BAA-1733 / DSM 21960 / TBF 19.5.1).